We begin with the raw amino-acid sequence, 603 residues long: NADH-ubiquinone oxidoreductase chain 5 (603 aa).

16 helical membrane passes run 4 to 24 (YTTM…ATLI), 36 to 56 (VKMT…MFMC), 87 to 107 (MMFI…SLWY), 114 to 134 (INQF…LVTA), 137 to 157 (LFQL…LIGW), 171 to 191 (AILY…WFLL), 200 to 220 (QMIL…LLAA), 241 to 261 (TPVS…FLLI), 272 to 292 (LIQT…AICA), 301 to 320 (IVAF…IGIN), 325 to 347 (AFLH…GSII), 366 to 386 (LPLT…MPFL), 407 to 429 (WALS…MILL), 457 to 477 (LTIG…PTSP), 482 to 502 (IPLY…LTAF), and 583 to 603 (MIKL…LLIM).

Belongs to the complex I subunit 5 family. In terms of assembly, core subunit of respiratory chain NADH dehydrogenase (Complex I) which is composed of 45 different subunits.

It is found in the mitochondrion inner membrane. The enzyme catalyses a ubiquinone + NADH + 5 H(+)(in) = a ubiquinol + NAD(+) + 4 H(+)(out). Its function is as follows. Core subunit of the mitochondrial membrane respiratory chain NADH dehydrogenase (Complex I) which catalyzes electron transfer from NADH through the respiratory chain, using ubiquinone as an electron acceptor. Essential for the catalytic activity and assembly of complex I. The protein is NADH-ubiquinone oxidoreductase chain 5 (MT-ND5) of Hylobates lar (Lar gibbon).